A 102-amino-acid chain; its full sequence is Small ribosomal subunit protein uS10 (102 aa).

Residues 34–61 (MAGPIPLPTKTLKVTTRKSTDGEGSSSF) are disordered.

The protein belongs to the universal ribosomal protein uS10 family. Part of the 30S ribosomal subunit.

Functionally, involved in the binding of tRNA to the ribosomes. The chain is Small ribosomal subunit protein uS10 from Methanococcus aeolicus (strain ATCC BAA-1280 / DSM 17508 / OCM 812 / Nankai-3).